We begin with the raw amino-acid sequence, 294 residues long: 4-hydroxy-tetrahydrodipicolinate synthase (294 aa).

T46 provides a ligand contact to pyruvate. The Proton donor/acceptor role is filled by Y135. K164 (schiff-base intermediate with substrate) is an active-site residue. Pyruvate is bound at residue I205.

The protein belongs to the DapA family. As to quaternary structure, homotetramer; dimer of dimers.

The protein resides in the cytoplasm. The catalysed reaction is L-aspartate 4-semialdehyde + pyruvate = (2S,4S)-4-hydroxy-2,3,4,5-tetrahydrodipicolinate + H2O + H(+). Its pathway is amino-acid biosynthesis; L-lysine biosynthesis via DAP pathway; (S)-tetrahydrodipicolinate from L-aspartate: step 3/4. Functionally, catalyzes the condensation of (S)-aspartate-beta-semialdehyde [(S)-ASA] and pyruvate to 4-hydroxy-tetrahydrodipicolinate (HTPA). In Nitratiruptor sp. (strain SB155-2), this protein is 4-hydroxy-tetrahydrodipicolinate synthase.